The primary structure comprises 217 residues: DNA-binding transcriptional activator DevR/DosR (217 aa).

Positions 3–119 (KVFLVDDHEV…ELARAVKDVG (117 aa)) constitute a Response regulatory domain. At Asp54 the chain carries 4-aspartylphosphate. Positions 143-208 (KQDPLSGLTD…QAAVFATELK (66 aa)) constitute an HTH luxR-type domain. Positions 167–186 (NKQIADRMFLAEKTVKNYVS) form a DNA-binding region, H-T-H motif. Phosphothreonine; by PknH is present on residues Thr198 and Thr205.

Homodimer. Interacts with NarL. In terms of processing, phosphorylated on Asp-54 by both DevS (DosS) and DosT. Phosphorylated on Thr-198 and Thr-205 by PknH, which enhances DevR dimerization. Aspartate phosphorylation and threonine phosphorylation cooperatively enhance DevR binding to DNA.

Its subcellular location is the cytoplasm. It localises to the host cytoplasmic vesicle. The protein localises to the host phagosome. Its function is as follows. Member of the two-component regulatory system DevR/DevS (also called DosR/DosS) involved in onset of the dormancy response. Regulates an approximately 48-member regulon. When phosphorylated binds and activates the promoter of DevR regulon genes in response to hypoxia. The presence of target DNA increases stability of phospho-DevR in vitro. Activates its own transcription under hypoxic but not aerobic conditions, probably binds as a dimer to tandem binding sites within the devR and hspX promoters. Accepts a phosphate group from DevS (DosS) and from DosT. Does not regulate transcription of dosT. In Mycobacterium tuberculosis (strain ATCC 25618 / H37Rv), this protein is DNA-binding transcriptional activator DevR/DosR.